The following is a 349-amino-acid chain: uncharacterized protein (349 aa).

The signal sequence occupies residues M1–A16. Topologically, residues M17–S326 are lumenal. 2 disordered regions span residues A115–R190 and T243–S322. Composition is skewed to low complexity over residues S116 to T176, T243 to G278, and S289 to S322. A helical transmembrane segment spans residues L327 to L347. Residues T348–L349 lie on the Cytoplasmic side of the membrane.

Its subcellular location is the endoplasmic reticulum membrane. This is an uncharacterized protein from Schizosaccharomyces pombe (strain 972 / ATCC 24843) (Fission yeast).